The following is a 228-amino-acid chain: Urease accessory protein UreE (228 aa).

Positions 193–228 (HGSGLHIHGIHSHGDGHSHSHDDHDHDHNHDHDHKH) are disordered. The segment covering 204–228 (SHGDGHSHSHDDHDHDHNHDHDHKH) has biased composition (basic and acidic residues).

The protein belongs to the UreE family.

It localises to the cytoplasm. Its function is as follows. Involved in urease metallocenter assembly. Binds nickel. Probably functions as a nickel donor during metallocenter assembly. This chain is Urease accessory protein UreE, found in Yersinia rohdei.